Reading from the N-terminus, the 192-residue chain is ADP-ribosylation factor-like protein 14 (192 aa).

G2 carries the N-myristoyl glycine lipid modification. GTP-binding positions include 20–27, 64–68, and 124–127; these read GLDSAGKS, DVGGQ, and NKQD.

This sequence belongs to the small GTPase superfamily. Arf family. In terms of assembly, interacts with ARL14EP.

The protein localises to the cytoplasmic vesicle. Its function is as follows. GTPase that recruits MYO1E to MHC class II-containing vesicles via the effector protein ARL14EP and hence controls the movement of these vesicles along the actin cytoskeleton in dendritic cells. This is ADP-ribosylation factor-like protein 14 (Arl14) from Mus musculus (Mouse).